Reading from the N-terminus, the 451-residue chain is Glyceraldehyde-3-phosphate dehydrogenase B, chloroplastic (451 aa).

Positions 1–25 (MATHAALASTRIPTNTRFPSKTSHS) are disordered. Residues 1–84 (MATHAALAST…STAVKGVTVA (84 aa)) constitute a chloroplast transit peptide. Residues 11–25 (RIPTNTRFPSKTSHS) are compositionally biased toward polar residues. Residues 95–96 (RI), Asp-119, and Arg-164 each bind NADP(+). Residues 238 to 240 (SCT), Thr-269, Arg-284, 297 to 298 (TG), and Arg-320 each bind D-glyceraldehyde 3-phosphate. The active-site Nucleophile is the Cys-239. Asn-403 serves as a coordination point for NADP(+).

The protein belongs to the glyceraldehyde-3-phosphate dehydrogenase family. As to quaternary structure, tetramer of either four A chains (GAPDH 2) or two A and two B chains (GAPDH 1).

It is found in the plastid. The protein localises to the chloroplast. The enzyme catalyses D-glyceraldehyde 3-phosphate + phosphate + NADP(+) = (2R)-3-phospho-glyceroyl phosphate + NADPH + H(+). It functions in the pathway carbohydrate biosynthesis; Calvin cycle. The protein is Glyceraldehyde-3-phosphate dehydrogenase B, chloroplastic (GAPB) of Pisum sativum (Garden pea).